The primary structure comprises 492 residues: Histone-lysine N-methyltransferase PRDM7 (492 aa).

The segment at 1–22 (MSPERSQEESPEGDTERTERKP) is disordered. A KRAB-related domain is found at 23–86 (MVKDAFKDIS…RRQAIKLQVD (64 aa)). Positions 111 to 179 (EQSKHQKGMP…ELRRKETEGK (69 aa)) are disordered. Over residues 135–150 (GTPNLLNTSDSEQAQK) the composition is skewed to polar residues. Positions 167-179 (LKLELRRKETEGK) are enriched in basic and acidic residues. The SET domain occupies 244-358 (PGLRIGPSGI…PGCELLVWSG (115 aa)).

The protein resides in the nucleus. Its subcellular location is the chromosome. The enzyme catalyses N(6),N(6)-dimethyl-L-lysyl(4)-[histone H3] + S-adenosyl-L-methionine = N(6),N(6),N(6)-trimethyl-L-lysyl(4)-[histone H3] + S-adenosyl-L-homocysteine + H(+). Its function is as follows. Histone methyltransferase that selectively methylates 'Lys-4' of dimethylated histone H3 (H3K4me2) to produce trimethylated 'Lys-4' histone H3 (H3K4me3). May play a role in epigenetic regulation of gene expression by defining an active chromatin state. The chain is Histone-lysine N-methyltransferase PRDM7 from Homo sapiens (Human).